The sequence spans 592 residues: Beta-fructofuranosidase, insoluble isoenzyme 2 (592 aa).

The first 40 residues, 1-40, serve as a signal peptide directing secretion; it reads MLIRCFHIKMALVTCFHSMLFLSAVVFIFSLDVNIRGVEA. Residue Asp-75 is part of the active site. Residues Asn-171, Asn-195, Asn-310, Asn-347, and Asn-568 are each glycosylated (N-linked (GlcNAc...) asparagine).

This sequence belongs to the glycosyl hydrolase 32 family.

The protein resides in the secreted. Its subcellular location is the cell wall. The enzyme catalyses Hydrolysis of terminal non-reducing beta-D-fructofuranoside residues in beta-D-fructofuranosides.. Its function is as follows. May play an important role in phloem unloading and in stress response. The chain is Beta-fructofuranosidase, insoluble isoenzyme 2 (INV2) from Daucus carota (Wild carrot).